Here is a 162-residue protein sequence, read N- to C-terminus: UPF0305 protein MMP0665 (162 aa).

Belongs to the UPF0305 family.

The chain is UPF0305 protein MMP0665 from Methanococcus maripaludis (strain DSM 14266 / JCM 13030 / NBRC 101832 / S2 / LL).